The chain runs to 431 residues: Gamma conglutin 1 (431 aa).

An N-terminal signal peptide occupies residues 1-24; that stretch reads MASFLHNFLLFFCSLSLIILTSSA. Residues 51–407 enclose the Peptidase A1 domain; the sequence is HVVQIHKRTP…DLMNSRLGFS (357 aa). 5 cysteine pairs are disulfide-bonded: Cys-79–Cys-168, Cys-93–Cys-106, Cys-98–Cys-123, Cys-109–Cys-118, and Cys-322–Cys-369.

This sequence belongs to the peptidase A1 family. In terms of assembly, two-subunit monomeric unit made of alpha and beta subunits coupled by disulfide bonds (at pH 4.5 and under non-reducing conditions). Monomeric alpha and beta subunits in reducing conditions. Can also form oligomers including dimer, tetramer and cyclic hexamer (trimer of dimers) (at pH &gt; 5.5). Component of globulins complexes which accumulate in seeds. Interacts with flavonoids (e.g. apigenin glucosides) present in globulins complexes.

The protein localises to the secreted. It is found in the extracellular space. Its function is as follows. Sulfur-rich seed storage protein that remains undegraded at germination. This chain is Gamma conglutin 1, found in Prunus dulcis (Almond).